The chain runs to 408 residues: 3-ketoacyl-CoA thiolase B, peroxisomal (408 aa).

The active-site Acyl-thioester intermediate is cysteine 112. Residues histidine 366 and cysteine 394 each act as proton acceptor in the active site.

It belongs to the thiolase-like superfamily. Thiolase family. Homodimer.

It is found in the peroxisome. The enzyme catalyses an acyl-CoA + acetyl-CoA = a 3-oxoacyl-CoA + CoA. It participates in lipid metabolism; fatty acid metabolism. The chain is 3-ketoacyl-CoA thiolase B, peroxisomal from Candida tropicalis (Yeast).